A 630-amino-acid polypeptide reads, in one-letter code: Auxin efflux carrier component 2 (630 aa).

At 1–6 the chain is on the extracellular side; sequence MITGRD. Residues 7 to 27 traverse the membrane as a helical segment; sequence IYDVLAAIVPLYVAMFLAYGS. Over 28-38 the chain is Cytoplasmic; sequence VRWWGIFTPDQ. Residues 39–59 form a helical membrane-spanning segment; the sequence is CSGINRFVAVFAVPLLSFHFI. A (indol-3-yl)acetate-binding site is contributed by valine 51. At 60–70 the chain is on the extracellular side; that stretch reads STNDPYSMNYR. Residues 71 to 91 form a helical membrane-spanning segment; that stretch reads FLAADSLQKLVILAALAVWHN. Topologically, residues 92–108 are cytoplasmic; that stretch reads LLSRYRRNGGAAASLDW. The helical transmembrane segment at 109 to 129 threads the bilayer; sequence TITLFSLSTLPNTLVMGIPLL. (indol-3-yl)acetate is bound by residues asparagine 120 and leucine 122. Residues 130 to 139 lie on the Extracellular side of the membrane; it reads RAMYGDFSGS. The helical transmembrane segment at 140 to 160 threads the bilayer; sequence LMVQIVVLQSVIWYTLMLFLF. Tyrosine 153 serves as a coordination point for (indol-3-yl)acetate. Residues 161-490 are Cytoplasmic-facing; it reads EYRGAKALIS…LIRNPNTYSS (330 aa). The disordered stretch occupies residues 317-350; sequence ASGKAADPPSYPAPNPGMMPAPRKKELGGSNSNS. A compositionally biased stretch (pro residues) spans 325–335; it reads PSYPAPNPGMM. Residues 491–511 form a helical membrane-spanning segment; that stretch reads LIGLVWSLVSFRWNIQMPSII. Over 512–514 the chain is Extracellular; sequence KGS. A helical membrane pass occupies residues 515–535; it reads ISILSDAGLGMAMFSLGLFMA. Over 536–549 the chain is Cytoplasmic; sequence LQPKIISCGKTVAT. A helical transmembrane segment spans residues 550–570; sequence FAMAVRFLTGPAVIAATSIAI. Residues 571-574 are Extracellular-facing; it reads GLRG. Residues 575–595 form a helical membrane-spanning segment; that stretch reads VLLHVAIVQAALPQGIVPFVF. 2 residues coordinate (indol-3-yl)acetate: isoleucine 590 and valine 591. At 596 to 609 the chain is on the cytoplasmic side; the sequence is AKEYNCHPQILSTA. Residues 610 to 630 traverse the membrane as a helical segment; that stretch reads VIFGMLIALPITILYYVLLGI.

The protein belongs to the auxin efflux carrier (TC 2.A.69.1) family. Homodimer. In terms of tissue distribution, expressed in roots, leaves, shoot apex and panicles. Expressed in roots, stem bases and young panicles.

Its subcellular location is the membrane. In terms of biological role, acts as a component of the auxin efflux carrier. Involved in the basipetal polar auxin transport which contributes to the spreading growth of the tillers. The protein is Auxin efflux carrier component 2 of Oryza sativa subsp. japonica (Rice).